Consider the following 354-residue polypeptide: Uroporphyrinogen decarboxylase (354 aa).

Substrate is bound by residues 27–31 (RQAGR), aspartate 77, tyrosine 154, threonine 209, and histidine 327.

Belongs to the uroporphyrinogen decarboxylase family. Homodimer.

The protein resides in the cytoplasm. The enzyme catalyses uroporphyrinogen III + 4 H(+) = coproporphyrinogen III + 4 CO2. The protein operates within porphyrin-containing compound metabolism; protoporphyrin-IX biosynthesis; coproporphyrinogen-III from 5-aminolevulinate: step 4/4. Its function is as follows. Catalyzes the decarboxylation of four acetate groups of uroporphyrinogen-III to yield coproporphyrinogen-III. The sequence is that of Uroporphyrinogen decarboxylase from Actinobacillus pleuropneumoniae serotype 5b (strain L20).